The following is a 444-amino-acid chain: Tubulin beta-4A chain (444 aa).

The short motif at 1 to 4 is the MREI motif element; that stretch reads MREI. 6 residues coordinate GTP: Gln11, Glu69, Ser138, Gly142, Thr143, and Gly144. Glu69 is a Mg(2+) binding site. Phosphoserine; by CDK1 is present on Ser172. 2 residues coordinate GTP: Asn204 and Asn226. A 5-glutamyl polyglutamate modification is found at Glu436.

The protein belongs to the tubulin family. In terms of assembly, dimer of alpha and beta chains. A typical microtubule is a hollow water-filled tube with an outer diameter of 25 nm and an inner diameter of 15 nM. Alpha-beta heterodimers associate head-to-tail to form protofilaments running lengthwise along the microtubule wall with the beta-tubulin subunit facing the microtubule plus end conferring a structural polarity. Microtubules usually have 13 protofilaments but different protofilament numbers can be found in some organisms and specialized cells. Mg(2+) is required as a cofactor. Post-translationally, some glutamate residues at the C-terminus are polyglycylated, resulting in polyglycine chains on the gamma-carboxyl group. Glycylation is mainly limited to tubulin incorporated into axonemes (cilia and flagella) whereas glutamylation is prevalent in neuronal cells, centrioles, axonemes, and the mitotic spindle. Both modifications can coexist on the same protein on adjacent residues, and lowering polyglycylation levels increases polyglutamylation, and reciprocally. Cilia and flagella glycylation is required for their stability and maintenance. Flagella glycylation controls sperm motility. In terms of processing, some glutamate residues at the C-terminus are polyglutamylated, resulting in polyglutamate chains on the gamma-carboxyl group. Polyglutamylation plays a key role in microtubule severing by spastin (SPAST). SPAST preferentially recognizes and acts on microtubules decorated with short polyglutamate tails: severing activity by SPAST increases as the number of glutamates per tubulin rises from one to eight, but decreases beyond this glutamylation threshold. Glutamylation is also involved in cilia motility. Phosphorylated on Ser-172 by CDK1 during the cell cycle, from metaphase to telophase, but not in interphase. This phosphorylation inhibits tubulin incorporation into microtubules.

The protein localises to the cytoplasm. It localises to the cytoskeleton. Functionally, tubulin is the major constituent of microtubules, a cylinder consisting of laterally associated linear protofilaments composed of alpha- and beta-tubulin heterodimers. Microtubules grow by the addition of GTP-tubulin dimers to the microtubule end, where a stabilizing cap forms. Below the cap, tubulin dimers are in GDP-bound state, owing to GTPase activity of alpha-tubulin. This chain is Tubulin beta-4A chain (TUBB4A), found in Bos taurus (Bovine).